The chain runs to 173 residues: Regulator of ribonuclease activity A (173 aa).

This sequence belongs to the RraA family. As to quaternary structure, homotrimer. Binds to both RNA-binding sites in the C-terminal region of Rne and to RhlB.

It localises to the cytoplasm. In terms of biological role, globally modulates RNA abundance by binding to RNase E (Rne) and regulating its endonucleolytic activity. Can modulate Rne action in a substrate-dependent manner by altering the composition of the degradosome. Modulates RNA-binding and helicase activities of the degradosome. This Vibrio vulnificus (strain CMCP6) protein is Regulator of ribonuclease activity A.